A 290-amino-acid chain; its full sequence is Membrane protein insertase YidC (290 aa).

Positions 1 to 19 (MKKKALLPLFLGIMVFLAG) are cleaved as a signal peptide. Cys-20 is lipidated: N-palmitoyl cysteine. Cys-20 is lipidated: S-diacylglycerol cysteine. 5 helical membrane passes run 56-76 (YGLA…PFML), 134-154 (MLGC…YFVL), 176-196 (PDIW…YVSS), 207-224 (GYMM…ISLS), and 229-251 (LGLY…NIYY). A disordered region spans residues 270 to 290 (HNGGSNKKGKNTQVVSKKKKK).

It belongs to the OXA1/ALB3/YidC family. Type 2 subfamily.

The protein localises to the cell membrane. In terms of biological role, required for the insertion and/or proper folding and/or complex formation of integral membrane proteins into the membrane. Involved in integration of membrane proteins that insert both dependently and independently of the Sec translocase complex, as well as at least some lipoproteins. This is Membrane protein insertase YidC from Staphylococcus aureus (strain Mu3 / ATCC 700698).